The primary structure comprises 206 residues: Ras-related protein Rab7 (206 aa).

GTP-binding positions include 15–22, 63–67, and 125–128; these read GDTGVGKT, DTAGQ, and NKID. Residues cysteine 204 and cysteine 206 are each lipidated (S-geranylgeranyl cysteine). Position 206 is a cysteine methyl ester (cysteine 206).

The protein belongs to the small GTPase superfamily. Rab family.

The protein resides in the cell membrane. Protein transport. Probably involved in vesicular traffic. This Vigna aconitifolia (Moth bean) protein is Ras-related protein Rab7.